The primary structure comprises 858 residues: Bifunctional uridylyltransferase/uridylyl-removing enzyme (858 aa).

Residues 1–324 (MSAHAAPSPE…PATSGITRVL (324 aa)) form a uridylyltransferase region. Positions 325 to 681 (SPDRFVEKQG…ARPSPIGDAL (357 aa)) are uridylyl-removing. Residues 443–565 (VDQHILMVLR…VGNERYLTAL (123 aa)) form the HD domain. ACT domains lie at 682 to 761 (QVLV…PEPS) and 790 to 858 (ILSV…AIAV).

It belongs to the GlnD family. Mg(2+) is required as a cofactor.

The catalysed reaction is [protein-PII]-L-tyrosine + UTP = [protein-PII]-uridylyl-L-tyrosine + diphosphate. It carries out the reaction [protein-PII]-uridylyl-L-tyrosine + H2O = [protein-PII]-L-tyrosine + UMP + H(+). With respect to regulation, uridylyltransferase (UTase) activity is inhibited by glutamine, while glutamine activates uridylyl-removing (UR) activity. Its function is as follows. Modifies, by uridylylation and deuridylylation, the PII regulatory proteins (GlnB and homologs), in response to the nitrogen status of the cell that GlnD senses through the glutamine level. Under low glutamine levels, catalyzes the conversion of the PII proteins and UTP to PII-UMP and PPi, while under higher glutamine levels, GlnD hydrolyzes PII-UMP to PII and UMP (deuridylylation). Thus, controls uridylylation state and activity of the PII proteins, and plays an important role in the regulation of nitrogen fixation and metabolism. The protein is Bifunctional uridylyltransferase/uridylyl-removing enzyme of Burkholderia lata (strain ATCC 17760 / DSM 23089 / LMG 22485 / NCIMB 9086 / R18194 / 383).